The primary structure comprises 1182 residues: DNA-directed RNA polymerase subunit beta (1182 aa).

It belongs to the RNA polymerase beta chain family. As to quaternary structure, the RNAP catalytic core consists of 2 alpha, 1 beta, 1 beta' and 1 omega subunit. When a sigma factor is associated with the core the holoenzyme is formed, which can initiate transcription.

The catalysed reaction is RNA(n) + a ribonucleoside 5'-triphosphate = RNA(n+1) + diphosphate. In terms of biological role, DNA-dependent RNA polymerase catalyzes the transcription of DNA into RNA using the four ribonucleoside triphosphates as substrates. The polypeptide is DNA-directed RNA polymerase subunit beta (Fervidobacterium nodosum (strain ATCC 35602 / DSM 5306 / Rt17-B1)).